The sequence spans 572 residues: Urease subunit alpha (572 aa).

A Urease domain is found at 136–572; sequence GGIDTHIHFI…VPLGQRYFLF (437 aa). Positions 141, 143, and 224 each coordinate Ni(2+). At Lys224 the chain carries N6-carboxylysine. His226 provides a ligand contact to substrate. 2 residues coordinate Ni(2+): His253 and His279. Catalysis depends on His327, which acts as the Proton donor. Asp367 contacts Ni(2+).

It belongs to the metallo-dependent hydrolases superfamily. Urease alpha subunit family. As to quaternary structure, heterotrimer of UreA (gamma), UreB (beta) and UreC (alpha) subunits. Three heterotrimers associate to form the active enzyme. The cofactor is Ni cation. Post-translationally, carboxylation allows a single lysine to coordinate two nickel ions.

It is found in the cytoplasm. The enzyme catalyses urea + 2 H2O + H(+) = hydrogencarbonate + 2 NH4(+). Its pathway is nitrogen metabolism; urea degradation; CO(2) and NH(3) from urea (urease route): step 1/1. This chain is Urease subunit alpha, found in Haemophilus influenzae (strain 86-028NP).